The chain runs to 410 residues: Phytoene synthase 1, chloroplastic (410 aa).

The N-terminal 62 residues, 1–62 (MAIILVRAAS…EAGRPSPAVY (62 aa)), are a transit peptide targeting the chloroplast.

The protein belongs to the phytoene/squalene synthase family. In terms of assembly, monomer. Expressed in embryos, endosperm and seedling leaves. Expressed in leaves and endosperm.

The protein localises to the plastid. Its subcellular location is the chloroplast stroma. It catalyses the reaction 2 (2E,6E,10E)-geranylgeranyl diphosphate = 15-cis-phytoene + 2 diphosphate. Its pathway is carotenoid biosynthesis; phytoene biosynthesis; all-trans-phytoene from geranylgeranyl diphosphate: step 1/1. Catalyzes the conversion of geranylgeranyl diphosphate to phytoene. Mediates the first committed step in carotenoid biosynthesis. In Zea mays (Maize), this protein is Phytoene synthase 1, chloroplastic.